The primary structure comprises 128 residues: Histone H2A.2 (128 aa).

This sequence belongs to the histone H2A family. The nucleosome is a histone octamer containing two molecules each of H2A, H2B, H3 and H4 assembled in one H3-H4 heterotetramer and two H2A-H2B heterodimers. The octamer wraps approximately 147 bp of DNA. Expressed in the generative cell within the bicellular pollen. Not detected in other reproductive or vegetative tissues.

Its subcellular location is the nucleus. It is found in the chromosome. In terms of biological role, core component of nucleosome. Nucleosomes wrap and compact DNA into chromatin, limiting DNA accessibility to the cellular machineries which require DNA as a template. Histones thereby play a central role in transcription regulation, DNA repair, DNA replication and chromosomal stability. DNA accessibility is regulated via a complex set of post-translational modifications of histones, also called histone code, and nucleosome remodeling. May be involved in the repression of gene expression in male gametes. The protein is Histone H2A.2 (gH2A) of Lilium longiflorum (Trumpet lily).